The following is a 174-amino-acid chain: Glyoxylase I 4 (174 aa).

The VOC domain maps to 13–135 (SLNHVSVLCR…DGFMIEICNC (123 aa)). Glu-131 functions as the Proton donor/acceptor in the catalytic mechanism.

It belongs to the glyoxalase I family. In terms of tissue distribution, mostly expressed in roots, and, to a lower extent, in leaves, flowers, seeds and siliques.

The protein localises to the cell membrane. Its subcellular location is the cytoplasm. Functionally, involved in the detoxification and scavenging of methylglyoxal (MG), a cytotoxic aldehyde produced in response to primary metabolism alteration observed during biotic and abiotic stresses. Modulates cross-talk between salicylic acid (SA) and jasmonic acid (JA) signaling pathways during defense responses to pathogens such as Botrytis cinerea. This is Glyoxylase I 4 from Arabidopsis thaliana (Mouse-ear cress).